The following is a 236-amino-acid chain: Protein CUSTOS (236 aa).

Disordered regions lie at residues 1–57 (MSES…GTTP) and 83–236 (VEPA…KKDE). Composition is skewed to basic and acidic residues over residues 10-51 (NTAR…HDGN) and 156-165 (EKTEEKSTKE). The Nucleolar localization signal (NLS1) motif lies at 173–181 (KMKKKKKRK). Basic and acidic residues predominate over residues 182-196 (TSSEESQDKVNHQTE). Residues 197 to 210 (KQSNVEGNQEQTTA) are compositionally biased toward polar residues. The short motif at 211–219 (GERLKKKKK) is the Nucleolar localization signal (NLS2) element. Residues 214–227 (LKKKKKKKKKKRKK) are compositionally biased toward basic residues.

Belongs to the CUSTOS family. As to quaternary structure, interacts (via NLS1 and NLS2) with dvl2; the interaction is negatively regulated by Wnt stimulation. Interacts with csnk1a1. Interacts with ctnnb1; the interaction is positively regulated by Wnt stimulation. In terms of processing, phosphorylated by ck1/csnk1a1.

It is found in the nucleus envelope. Essential for Spemann-Mangold organizer formation and subsequent anterior head development in the embryo. Inhibits canonical Wnt signaling pathway by antagonizing nuclear import of beta-catenin (ctnnb1) during embryogenesis. In Danio rerio (Zebrafish), this protein is Protein CUSTOS.